The primary structure comprises 502 residues: ATP synthase subunit alpha (502 aa).

169 to 176 (GDRQTGKT) lines the ATP pocket.

Belongs to the ATPase alpha/beta chains family. F-type ATPases have 2 components, CF(1) - the catalytic core - and CF(0) - the membrane proton channel. CF(1) has five subunits: alpha(3), beta(3), gamma(1), delta(1), epsilon(1). CF(0) has three main subunits: a(1), b(2) and c(9-12). The alpha and beta chains form an alternating ring which encloses part of the gamma chain. CF(1) is attached to CF(0) by a central stalk formed by the gamma and epsilon chains, while a peripheral stalk is formed by the delta and b chains.

It is found in the cell membrane. It catalyses the reaction ATP + H2O + 4 H(+)(in) = ADP + phosphate + 5 H(+)(out). In terms of biological role, produces ATP from ADP in the presence of a proton gradient across the membrane. The alpha chain is a regulatory subunit. The polypeptide is ATP synthase subunit alpha (Bacillus velezensis (strain DSM 23117 / BGSC 10A6 / LMG 26770 / FZB42) (Bacillus amyloliquefaciens subsp. plantarum)).